Here is a 104-residue protein sequence, read N- to C-terminus: uncharacterized protein (104 aa).

This is an uncharacterized protein from Homo sapiens (Human).